The sequence spans 179 residues: Small ribosomal subunit protein uS5 (179 aa).

One can recognise an S5 DRBM domain in the interval 22 to 85 (MIEKLVAVNR…EYARKRMSNV (64 aa)).

It belongs to the universal ribosomal protein uS5 family. As to quaternary structure, part of the 30S ribosomal subunit. Contacts proteins S4 and S8.

Its function is as follows. With S4 and S12 plays an important role in translational accuracy. Functionally, located at the back of the 30S subunit body where it stabilizes the conformation of the head with respect to the body. This Xylella fastidiosa (strain M23) protein is Small ribosomal subunit protein uS5.